We begin with the raw amino-acid sequence, 221 residues long: Octanoyltransferase (221 aa).

The BPL/LPL catalytic domain occupies 40–218 (PNLEDVLILL…AFAEVFGLEL (179 aa)). Residues 82–89 (RGGEVTYH), 149–151 (AIG), and 162–164 (GFA) each bind substrate. Residue Cys180 is the Acyl-thioester intermediate of the active site.

The protein belongs to the LipB family.

The protein resides in the cytoplasm. The enzyme catalyses octanoyl-[ACP] + L-lysyl-[protein] = N(6)-octanoyl-L-lysyl-[protein] + holo-[ACP] + H(+). It functions in the pathway protein modification; protein lipoylation via endogenous pathway; protein N(6)-(lipoyl)lysine from octanoyl-[acyl-carrier-protein]: step 1/2. Functionally, catalyzes the transfer of endogenously produced octanoic acid from octanoyl-acyl-carrier-protein onto the lipoyl domains of lipoate-dependent enzymes. Lipoyl-ACP can also act as a substrate although octanoyl-ACP is likely to be the physiological substrate. The polypeptide is Octanoyltransferase (Nostoc sp. (strain PCC 7120 / SAG 25.82 / UTEX 2576)).